A 533-amino-acid chain; its full sequence is Tyrosine-protein kinase transforming protein Fps (533 aa).

Residues 1–46 (ASGQLHRPQPQEHTSTSAAAGTWRHTQASESRHRLPHCSAAPSHQD) form a disordered region. The span at 11-29 (QEHTSTSAAAGTWRHTQAS) shows a compositional bias: polar residues. The F-BAR; degenerate domain maps to 50-124 (MGFGPELWCP…LQEDRQSVCS (75 aa)). Residues 171–260 (WYHGAIPRSE…KSGIVLTRAV (90 aa)) enclose the SH2 domain. Positions 272 to 525 (VLLGERIGRG…PSFGAVHQDL (254 aa)) constitute a Protein kinase domain. Residues 278 to 286 (IGRGNFGEV) and lysine 301 contribute to the ATP site. Aspartate 394 serves as the catalytic Proton acceptor. Tyrosine 424 carries the phosphotyrosine; by autocatalysis modification.

Belongs to the protein kinase superfamily. Tyr protein kinase family. Fes/fps subfamily.

It catalyses the reaction L-tyrosyl-[protein] + ATP = O-phospho-L-tyrosyl-[protein] + ADP + H(+). The protein is Tyrosine-protein kinase transforming protein Fps (V-FPS) of Gallus gallus (Chicken).